Here is a 795-residue protein sequence, read N- to C-terminus: Phenylalanine--tRNA ligase beta subunit (795 aa).

Positions Ala39 to Arg148 constitute a tRNA-binding domain. One can recognise a B5 domain in the interval Pro401–Asn476. The Mg(2+) site is built by Asp454, Asp460, Glu463, and Glu464. Residues Ser701–Arg794 form the FDX-ACB domain.

Belongs to the phenylalanyl-tRNA synthetase beta subunit family. Type 1 subfamily. Tetramer of two alpha and two beta subunits. The cofactor is Mg(2+).

The protein localises to the cytoplasm. The enzyme catalyses tRNA(Phe) + L-phenylalanine + ATP = L-phenylalanyl-tRNA(Phe) + AMP + diphosphate + H(+). This Mannheimia succiniciproducens (strain KCTC 0769BP / MBEL55E) protein is Phenylalanine--tRNA ligase beta subunit.